Reading from the N-terminus, the 59-residue chain is Conotoxin ViVA (59 aa).

Positions 1 to 19 (MRCVPVFIILLLLIPSASS) are cleaved as a signal peptide. Residues 20–46 (AAVQPKTEKDDVPLASVHDSALRILSR) constitute a propeptide that is removed on maturation. Position 47 is a pyrrolidone carboxylic acid (Gln-47). 2 disulfides stabilise this stretch: Cys-48–Cys-55 and Cys-49–Cys-56. Ile-58 is subject to Isoleucine amide.

Belongs to the conotoxin T superfamily. As to expression, expressed by the venom duct.

The protein resides in the secreted. In Conus virgo (Virgin cone), this protein is Conotoxin ViVA.